Here is an 84-residue protein sequence, read N- to C-terminus: Small ribosomal subunit protein bS16 (84 aa).

The protein belongs to the bacterial ribosomal protein bS16 family.

The sequence is that of Small ribosomal subunit protein bS16 from Paraburkholderia phytofirmans (strain DSM 17436 / LMG 22146 / PsJN) (Burkholderia phytofirmans).